The sequence spans 205 residues: LexA repressor (205 aa).

The H-T-H motif DNA-binding region spans 28–48; sequence RAEIATRLGFKSANAAEEHLK. Active-site for autocatalytic cleavage activity residues include serine 122 and lysine 159.

It belongs to the peptidase S24 family. In terms of assembly, homodimer.

It carries out the reaction Hydrolysis of Ala-|-Gly bond in repressor LexA.. In terms of biological role, represses a number of genes involved in the response to DNA damage (SOS response), including recA and lexA. In the presence of single-stranded DNA, RecA interacts with LexA causing an autocatalytic cleavage which disrupts the DNA-binding part of LexA, leading to derepression of the SOS regulon and eventually DNA repair. The sequence is that of LexA repressor from Shewanella denitrificans (strain OS217 / ATCC BAA-1090 / DSM 15013).